Here is a 144-residue protein sequence, read N- to C-terminus: FK506-binding protein 2 (144 aa).

An N-terminal signal peptide occupies residues 1 to 20; the sequence is MARIIVLIVAFMALIAGVFA. The 89-residue stretch at 48–136 folds into the PPIase FKBP-type domain; it reads GDTVSVHYTG…IFTTELVSID (89 aa). The short motif at 141-144 is the Prevents secretion from ER element; sequence RDEL.

It belongs to the FKBP-type PPIase family. FKBP2 subfamily.

Its subcellular location is the endoplasmic reticulum. The enzyme catalyses [protein]-peptidylproline (omega=180) = [protein]-peptidylproline (omega=0). With respect to regulation, inhibited by both FK506 and rapamycin. Functionally, PPIases accelerate the folding of proteins. It catalyzes the cis-trans isomerization of proline imidic peptide bonds in oligopeptides. This Yarrowia lipolytica (strain CLIB 122 / E 150) (Yeast) protein is FK506-binding protein 2 (FPR2).